Consider the following 208-residue polypeptide: ATP-dependent Clp protease proteolytic subunit (208 aa).

Ser106 (nucleophile) is an active-site residue. His131 is a catalytic residue.

Belongs to the peptidase S14 family. As to quaternary structure, fourteen ClpP subunits assemble into 2 heptameric rings which stack back to back to give a disk-like structure with a central cavity, resembling the structure of eukaryotic proteasomes.

It localises to the cytoplasm. It catalyses the reaction Hydrolysis of proteins to small peptides in the presence of ATP and magnesium. alpha-casein is the usual test substrate. In the absence of ATP, only oligopeptides shorter than five residues are hydrolyzed (such as succinyl-Leu-Tyr-|-NHMec, and Leu-Tyr-Leu-|-Tyr-Trp, in which cleavage of the -Tyr-|-Leu- and -Tyr-|-Trp bonds also occurs).. Its function is as follows. Cleaves peptides in various proteins in a process that requires ATP hydrolysis. Has a chymotrypsin-like activity. Plays a major role in the degradation of misfolded proteins. The polypeptide is ATP-dependent Clp protease proteolytic subunit (Caulobacter sp. (strain K31)).